Here is a 1190-residue protein sequence, read N- to C-terminus: Tight junction protein 2 (1190 aa).

Ser16 is modified (phosphoserine). In terms of domain architecture, PDZ 1 spans 33–120 (TVTLQKDSKR…VAAIVVKRPR (88 aa)). Phosphoserine is present on residues Ser130, Ser150, Ser153, Ser163, Ser168, Ser170, Ser174, Ser200, Ser220, Ser232, Ser244, Ser266, Ser325, Ser398, Ser400, Ser406, Ser415, Ser424, Ser430, and Ser431. The tract at residues 152–306 (RSGYSERSRL…PEPRGRPGPI (155 aa)) is disordered. Residues 169–291 (RSWEDSPERG…PRSRSREHPH (123 aa)) show a composition bias toward basic and acidic residues. A PDZ 2 domain is found at 307–385 (GVLLMKSRAN…KLQLVVLRDS (79 aa)). Residues 408-506 (IESNRSFSPE…RPSPEDEAIY (99 aa)) are disordered. Residues 415–446 (SPEERRHQYSDYDYHSSSEKLKERPSSREDTP) show a composition bias toward basic and acidic residues. Residue Thr455 is modified to Phosphothreonine. A Phosphoserine modification is found at Ser499. The region spanning 509–590 (NTKMVRFKKG…GEMVTILAQS (82 aa)) is the PDZ 3 domain. Tyr574 carries the post-translational modification Phosphotyrosine. One can recognise an SH3 domain in the interval 604–669 (GDSFFIRSHF…PNKSRAEQMA (66 aa)). The region spanning 678-876 (NAGDRADFWR…WFGSLKDTIQ (199 aa)) is the Guanylate kinase-like domain. 2 positions are modified to phosphoserine: Ser702 and Ser902. At Thr905 the chain carries Phosphothreonine. Residues Ser913 and Ser920 each carry the phosphoserine modification. 2 disordered regions span residues 920-1079 (SDFE…KSVL) and 1105-1190 (NARI…DTEL). 2 positions are modified to phosphothreonine: Thr925 and Thr933. Residues 956–967 (VQHEESIRKPSP) show a composition bias toward basic and acidic residues. Residues Ser966, Ser978, Ser986, Ser1006, Ser1067, and Ser1068 each carry the phosphoserine modification. Over residues 994–1014 (EPPKAKTQNKEESYDFSKSYE) the composition is skewed to basic and acidic residues. Residues 1060-1072 (EGEEVGESSEEQD) show a composition bias toward acidic residues. Tyr1118 is subject to Phosphotyrosine. Thr1131 is subject to Phosphothreonine. Ser1147 and Ser1159 each carry phosphoserine. Residues 1166 to 1175 (YRQQLSEHSK) are compositionally biased toward basic and acidic residues. Residues 1188–1190 (TEL) form an interaction with SCRIB region.

The protein belongs to the MAGUK family. As to quaternary structure, homodimer. Interacts (via PDZ2 domain) with TJP1/ZO1 (via PDZ2 domain). Interacts with OCLN. Interacts with UBN1. Interacts with SAFB in the nucleus. Interacts with SCRIB. Interacts with USP53 (via the C-terminal region). Interacts with claudins, including CLDN1, CLDN2, CLDN3, CLDN5 and CLDN7. Interacts with CLDN18. Interacts (via N-terminus) with CTNNA1. As to expression, this protein is found in epithelial cell junctions. Isoform A1 is abundant in the heart and brain. Detected in brain and skeletal muscle. It is present almost exclusively in normal tissues. Isoform C1 is expressed at high level in the kidney, pancreas, heart and placenta. Not detected in brain and skeletal muscle. Found in normal as well as in most neoplastic tissues.

Its subcellular location is the cell junction. The protein localises to the adherens junction. It localises to the cell membrane. The protein resides in the tight junction. It is found in the nucleus. Its function is as follows. Plays a role in tight junctions and adherens junctions. Acts as a positive regulator of RANKL-induced osteoclast differentiation, potentially via mediating downstream transcriptional activity. The protein is Tight junction protein 2 of Homo sapiens (Human).